We begin with the raw amino-acid sequence, 83 residues long: Translation initiation factor IF-1 (83 aa).

In terms of domain architecture, S1-like spans 1–72 (MAKEESIEMQ…TRGRIVYREA (72 aa)).

Belongs to the IF-1 family. In terms of assembly, component of the 30S ribosomal translation pre-initiation complex which assembles on the 30S ribosome in the order IF-2 and IF-3, IF-1 and N-formylmethionyl-tRNA(fMet); mRNA recruitment can occur at any time during PIC assembly.

The protein resides in the cytoplasm. One of the essential components for the initiation of protein synthesis. Stabilizes the binding of IF-2 and IF-3 on the 30S subunit to which N-formylmethionyl-tRNA(fMet) subsequently binds. Helps modulate mRNA selection, yielding the 30S pre-initiation complex (PIC). Upon addition of the 50S ribosomal subunit IF-1, IF-2 and IF-3 are released leaving the mature 70S translation initiation complex. In Coxiella burnetii (strain Dugway 5J108-111), this protein is Translation initiation factor IF-1.